The chain runs to 203 residues: ATP-dependent Clp protease proteolytic subunit (203 aa).

The active-site Nucleophile is Ser107. Residue His132 is part of the active site.

The protein belongs to the peptidase S14 family. As to quaternary structure, fourteen ClpP subunits assemble into 2 heptameric rings which stack back to back to give a disk-like structure with a central cavity, resembling the structure of eukaryotic proteasomes.

It localises to the cytoplasm. It carries out the reaction Hydrolysis of proteins to small peptides in the presence of ATP and magnesium. alpha-casein is the usual test substrate. In the absence of ATP, only oligopeptides shorter than five residues are hydrolyzed (such as succinyl-Leu-Tyr-|-NHMec, and Leu-Tyr-Leu-|-Tyr-Trp, in which cleavage of the -Tyr-|-Leu- and -Tyr-|-Trp bonds also occurs).. Cleaves peptides in various proteins in a process that requires ATP hydrolysis. Has a chymotrypsin-like activity. Plays a major role in the degradation of misfolded proteins. In Shewanella denitrificans (strain OS217 / ATCC BAA-1090 / DSM 15013), this protein is ATP-dependent Clp protease proteolytic subunit.